Here is a 368-residue protein sequence, read N- to C-terminus: UDP-N-acetylglucosamine--N-acetylmuramyl-(pentapeptide) pyrophosphoryl-undecaprenol N-acetylglucosamine transferase (368 aa).

UDP-N-acetyl-alpha-D-glucosamine is bound by residues 11 to 13 (TGG), Asn-123, Arg-164, Ser-188, Ile-250, and Gln-295.

Belongs to the glycosyltransferase 28 family. MurG subfamily.

The protein localises to the cell inner membrane. It catalyses the reaction di-trans,octa-cis-undecaprenyl diphospho-N-acetyl-alpha-D-muramoyl-L-alanyl-D-glutamyl-meso-2,6-diaminopimeloyl-D-alanyl-D-alanine + UDP-N-acetyl-alpha-D-glucosamine = di-trans,octa-cis-undecaprenyl diphospho-[N-acetyl-alpha-D-glucosaminyl-(1-&gt;4)]-N-acetyl-alpha-D-muramoyl-L-alanyl-D-glutamyl-meso-2,6-diaminopimeloyl-D-alanyl-D-alanine + UDP + H(+). It functions in the pathway cell wall biogenesis; peptidoglycan biosynthesis. Its function is as follows. Cell wall formation. Catalyzes the transfer of a GlcNAc subunit on undecaprenyl-pyrophosphoryl-MurNAc-pentapeptide (lipid intermediate I) to form undecaprenyl-pyrophosphoryl-MurNAc-(pentapeptide)GlcNAc (lipid intermediate II). The chain is UDP-N-acetylglucosamine--N-acetylmuramyl-(pentapeptide) pyrophosphoryl-undecaprenol N-acetylglucosamine transferase from Solidesulfovibrio magneticus (strain ATCC 700980 / DSM 13731 / RS-1) (Desulfovibrio magneticus).